A 389-amino-acid chain; its full sequence is MLELLFLLLPVAAAYGWYMGRRSAQQNKQDEANRLSRDYVAGVNFLLSNQQDKAVDLFLDMLKEDTGTVEAHLTLGNLFRSRGEVDRAIRIHQTLMESASLTYEQRLLAIQQLGRDYMAAGLYDRAEDMFNQLTDETDFRIGALQQLLQIYQATSEWQKAIDVAERLVKLGKDKQRVEIAHFYCELALQHMASDDLDRAMTLLKKGAAADKNSARVSIMMGRVFMAKGEYAKAVESLQRVISQDRELVSETLEMLQTCYQQLGKTAEWAEFLQRAVEENTGADAELMLADIIEARDGSEAAQVYITRQLQRHPTMRVFHKLMDYHLNEAEEGRAKESLMVLRDMVGEKVRSKPRYRCQKCGFTAYTLYWHCPSCRAWSTIKPIRGLDGL.

The helical transmembrane segment at 1 to 20 threads the bilayer; sequence MLELLFLLLPVAAAYGWYMG. The Cytoplasmic portion of the chain corresponds to 21 to 389; it reads RRSAQQNKQD…IKPIRGLDGL (369 aa). TPR repeat units lie at residues 35–68, 69–102, 107–140, 142–174, 180–213, 214–247, and 249–282; these read LSRD…DTGT, VEAH…ASLT, LLAI…TDFR, GALQ…GKDK, AHFY…DKNS, ARVS…DREL, and SETL…NTGA. Fe cation-binding residues include C357, C360, C371, and C374.

It belongs to the LapB family.

The protein resides in the cell inner membrane. Modulates cellular lipopolysaccharide (LPS) levels by regulating LpxC, which is involved in lipid A biosynthesis. May act by modulating the proteolytic activity of FtsH towards LpxC. May also coordinate assembly of proteins involved in LPS synthesis at the plasma membrane. The sequence is that of Lipopolysaccharide assembly protein B from Escherichia coli O157:H7.